We begin with the raw amino-acid sequence, 567 residues long: Urease subunit alpha (567 aa).

The 439-residue stretch at 129–567 (GGIDVHVHFI…VPMSQRYFLF (439 aa)) folds into the Urease domain. Ni(2+) contacts are provided by His-134, His-136, and Lys-217. At Lys-217 the chain carries N6-carboxylysine. Residue His-219 participates in substrate binding. Ni(2+) is bound by residues His-246 and His-272. His-320 (proton donor) is an active-site residue. Residue Asp-360 coordinates Ni(2+).

The protein belongs to the metallo-dependent hydrolases superfamily. Urease alpha subunit family. As to quaternary structure, heterotrimer of UreA (gamma), UreB (beta) and UreC (alpha) subunits. Three heterotrimers associate to form the active enzyme. Requires Ni cation as cofactor. Post-translationally, carboxylation allows a single lysine to coordinate two nickel ions.

The protein localises to the cytoplasm. The catalysed reaction is urea + 2 H2O + H(+) = hydrogencarbonate + 2 NH4(+). The protein operates within nitrogen metabolism; urea degradation; CO(2) and NH(3) from urea (urease route): step 1/1. This is Urease subunit alpha from Blochmanniella floridana.